Here is a 33-residue protein sequence, read N- to C-terminus: Brevinin-2DYd (33 aa).

C27 and C33 are disulfide-bonded.

As to expression, expressed by the skin glands.

Its subcellular location is the secreted. Its function is as follows. Antimicrobial peptide. A mixture of Brevinin-2DYc/2DYd is active against the Gram-positive bacterium S.aureus (MIC=15 uM) and the Gram-negative bacterium E.coli (MIC=15 uM). The polypeptide is Brevinin-2DYd (Rana dybowskii (Dybovsky's frog)).